Here is a 176-residue protein sequence, read N- to C-terminus: RNA pyrophosphohydrolase (176 aa).

The Nudix hydrolase domain occupies 6–149 (GYRPNVGIVI…KRDVYRRVMK (144 aa)). Positions 38–59 (GGINPGESPEQAMYRELYEEVG) match the Nudix box motif.

Belongs to the Nudix hydrolase family. RppH subfamily. It depends on a divalent metal cation as a cofactor.

Its function is as follows. Accelerates the degradation of transcripts by removing pyrophosphate from the 5'-end of triphosphorylated RNA, leading to a more labile monophosphorylated state that can stimulate subsequent ribonuclease cleavage. The protein is RNA pyrophosphohydrolase of Photorhabdus laumondii subsp. laumondii (strain DSM 15139 / CIP 105565 / TT01) (Photorhabdus luminescens subsp. laumondii).